Reading from the N-terminus, the 296-residue chain is 4-hydroxybenzoate octaprenyltransferase (296 aa).

8 helical membrane passes run 28 to 48 (PIGI…AGLG), 52 to 72 (LANV…GCCI), 102 to 122 (ALAL…CTNS), 145 to 167 (TYYP…FTAA), 174 to 196 (SAWL…YAMV), 219 to 239 (MIIL…GSRF), 241 to 261 (LGGW…WEYW), and 275 to 295 (FLHN…DYAL).

It belongs to the UbiA prenyltransferase family. It depends on Mg(2+) as a cofactor.

The protein localises to the cell inner membrane. It catalyses the reaction all-trans-octaprenyl diphosphate + 4-hydroxybenzoate = 4-hydroxy-3-(all-trans-octaprenyl)benzoate + diphosphate. It participates in cofactor biosynthesis; ubiquinone biosynthesis. Functionally, catalyzes the prenylation of para-hydroxybenzoate (PHB) with an all-trans polyprenyl group. Mediates the second step in the final reaction sequence of ubiquinone-8 (UQ-8) biosynthesis, which is the condensation of the polyisoprenoid side chain with PHB, generating the first membrane-bound Q intermediate 3-octaprenyl-4-hydroxybenzoate. In Pseudomonas putida (strain W619), this protein is 4-hydroxybenzoate octaprenyltransferase.